The following is a 54-amino-acid chain: Large ribosomal subunit protein bL33A (54 aa).

It belongs to the bacterial ribosomal protein bL33 family.

This is Large ribosomal subunit protein bL33A from Myxococcus xanthus (strain DK1622).